A 300-amino-acid chain; its full sequence is MNKEKVPQNAVPNGRTKLRQVTSATPLDEVFQYWEEDGAIVIKGLLTSAQVEQLNQEMGPILQKVAIGGHASDVRLQNFHGMKTKRAGDLTNNSAVFRDHLLDNDFIHAVSQRCFAYRGKMGPDAYWLGSASTIHVGPGQKPQTLHRDLGSYPIFWMLGPQGPESQINFLVATTDFTEANGATRIIPGSHKWEFNQHGDRDMTIPAEMKAGDCLLISGKVIHGTGGNKTDQERGCLAVTMCANFLAPEEAHPFIVSMGTAKKLPVRSQRCLGFRSQWPQSSPGLWTKDYSELALHLGLDD.

Residues His-146, Asp-148, and His-222 each coordinate Fe cation.

The protein belongs to the PhyH family. As to quaternary structure, homodimer. Fe cation is required as a cofactor.

Its pathway is mycotoxin biosynthesis. Functionally, dioxygenase; part of the gene cluster that mediates the biosynthesis of fumonisins B1 (FB1), B2 (FB2), B3 (FB3), and B4 (FB4), which are carcinogenic mycotoxins. Within the pathway, FUM3 performs the C-5 hydroxylation present in FB1 and FB2 and which occurs late in the biosynthesis. The biosynthesis starts with the FUM1-catalyzed carbon chain assembly from one molecule of acetyl-CoA, eight molecules of malonyl-CoA, and two molecules of methionine (in S-adenosyl form). The C18 polyketide chain is released from the enzyme by a nucleophilic attack of a carbanion, which is derived from R-carbon of alanine by decarboxylation, on the carbonyl carbon of polyketide acyl chain. This step is catalyzed by the pyridoxal 5'-phosphate-dependent aminoacyl transferase FUM8. The resultant 3-keto intermediate is then stereospecifically reduced to a 3-hydroxyl product by reductase FUM13. Subsequent oxidations at C-10 by the cytochrome P450 monooxygenase FUM2, C-14 and C-15 by FUM6, FUM12 or FUM15, tricarballylic esterification of the hydroxyl groups on C-14 and C-15 by acyltransferase FUM14, and C-5 hydroxylation by 2-keto-glutarate-dependent dioxygenase FUM3 furnish the biosynthesis of fumonisins. The tricarballylic moieties are most likely derived from the citric acid cycle, and their addition to the carbon backbone may involve FUM7, FUM10, FUM11 and FUM14. The sequence is that of Dioxygenase FUM3 from Gibberella moniliformis (strain M3125 / FGSC 7600) (Maize ear and stalk rot fungus).